The primary structure comprises 449 residues: Glucose-6-phosphate isomerase (449 aa).

The active-site Proton donor is Glu291. Residues His312 and Lys426 contribute to the active site.

The protein belongs to the GPI family.

The protein resides in the cytoplasm. It carries out the reaction alpha-D-glucose 6-phosphate = beta-D-fructose 6-phosphate. The protein operates within carbohydrate biosynthesis; gluconeogenesis. It functions in the pathway carbohydrate degradation; glycolysis; D-glyceraldehyde 3-phosphate and glycerone phosphate from D-glucose: step 2/4. In terms of biological role, catalyzes the reversible isomerization of glucose-6-phosphate to fructose-6-phosphate. The protein is Glucose-6-phosphate isomerase of Streptococcus pyogenes serotype M3 (strain ATCC BAA-595 / MGAS315).